The sequence spans 182 residues: Fatty-acid and retinol-binding protein 2 (182 aa).

The N-terminal stretch at 1–17 (MIRAFLVVALASVAVFS) is a signal peptide. 2 coiled-coil regions span residues 46–73 (LKAITAEEKAALKELAQNHKEYKTEEEF) and 131–152 (TLDSLKELAKGYIAEYKALSDD).

This sequence belongs to the fatty-acid and retinol-binding protein (FARBP) family.

The protein resides in the secreted. Probably binds lipids. This Caenorhabditis elegans protein is Fatty-acid and retinol-binding protein 2 (far-2).